A 340-amino-acid chain; its full sequence is Anthranilate phosphoribosyltransferase (340 aa).

5-phospho-alpha-D-ribose 1-diphosphate-binding positions include Gly-82, Gly-85–Asp-86, Thr-90, Asn-92–Ser-95, Lys-110–Ser-118, and Ala-122. Residue Gly-82 participates in anthranilate binding. Ser-94 contacts Mg(2+). Arg-168 contributes to the anthranilate binding site. Residues Asp-227 and Glu-228 each coordinate Mg(2+).

This sequence belongs to the anthranilate phosphoribosyltransferase family. As to quaternary structure, homodimer. It depends on Mg(2+) as a cofactor.

The catalysed reaction is N-(5-phospho-beta-D-ribosyl)anthranilate + diphosphate = 5-phospho-alpha-D-ribose 1-diphosphate + anthranilate. It participates in amino-acid biosynthesis; L-tryptophan biosynthesis; L-tryptophan from chorismate: step 2/5. Its function is as follows. Catalyzes the transfer of the phosphoribosyl group of 5-phosphorylribose-1-pyrophosphate (PRPP) to anthranilate to yield N-(5'-phosphoribosyl)-anthranilate (PRA). The polypeptide is Anthranilate phosphoribosyltransferase (Dechloromonas aromatica (strain RCB)).